A 593-amino-acid chain; its full sequence is MKLQAVMETLLQRQQRARQELEARQQLPPDPPAAPPGRARAAPDEDREPESARMQRAQMAALAAMRAAAAGLGHPASPGGSEDGPPGSEEEDAAREGTPGSPGRGREGPGEEHFEDMASDEDMKPKWEEEEMEEDLGEDEEEEEEDYEDEEEEEDEEGLGPPGPASLGTTALFPRKAQPPQAFRGDGVPRVLGGQERPGPGPAHPGGAAHVAPQLQPPDHGDWTYEEQFKQLYELDGDPKRKEFLDDLFSFMQKRGTPVNRIPIMAKQVLDLFMLYVLVTEKGGLVEVINKKLWREITKGLNLPTSITSAAFTLRTQYMKYLYPYECEKRGLSNPNELQAAIDSNRREGRRQSFGGSLFAYSPGGAHGMLSSPKLPVSSLGLAASTNGSSITPAPKIKKEEDSAIPITVPGRLPVSLAGHPVVAAQAAAVQAAAAQAAVAAQAAALEQLREKLESAEPPEKKMALVADEQQRLMQRALQQNFLAMAAQLPMSIRINSQASESRQDSAVNLTGTNGSNSISMSVEINGIMYTGVLFAQPPAPTPTSAPNKGGGGGGGSSSNAGGRGGNTGTSGGQAGPAGLSTPSTSTSNNSLP.

The segment at 14–222 is disordered; that stretch reads QQRARQELEA…PQLQPPDHGD (209 aa). A compositionally biased stretch (basic and acidic residues) spans 41-53; that stretch reads AAPDEDREPESAR. Low complexity predominate over residues 54–87; the sequence is MQRAQMAALAAMRAAAAGLGHPASPGGSEDGPPG. A phosphoserine mark is found at serine 77, serine 81, and serine 88. Threonine 98 bears the Phosphothreonine mark. 2 positions are modified to phosphoserine: serine 101 and serine 119. The segment covering 104–127 has biased composition (basic and acidic residues); the sequence is RGREGPGEEHFEDMASDEDMKPKW. Positions 119–156 are acidic; sequence SDEDMKPKWEEEEMEEDLGEDEEEEEEDYEDEEEEEDE. A compositionally biased stretch (acidic residues) spans 128-158; it reads EEEEMEEDLGEDEEEEEEDYEDEEEEEDEEG. Residues 238-330 form the ARID domain; it reads DPKRKEFLDD…YLYPYECEKR (93 aa). Serine 353 and serine 362 each carry phosphoserine. Glycyl lysine isopeptide (Lys-Gly) (interchain with G-Cter in SUMO2) cross-links involve residues lysine 398, lysine 399, lysine 452, and lysine 462. Residues 444–541 form the REKLES domain; sequence AALEQLREKL…GVLFAQPPAP (98 aa). Residues 445 to 488 are important for nuclear localization; that stretch reads ALEQLREKLESAEPPEKKMALVADEQQRLMQRALQQNFLAMAAQ. A homodimerization region spans residues 490–513; sequence PMSIRINSQASESRQDSAVNLTGT. Disordered regions lie at residues 497–516 and 539–593; these read SQASESRQDSAVNLTGTNGS and PAPT…NSLP. Residues 537-557 are important for cytoplasmic localization; sequence QPPAPTPTSAPNKGGGGGGGS. Residues 549–576 are compositionally biased toward gly residues; sequence KGGGGGGGSSSNAGGRGGNTGTSGGQAG. A compositionally biased stretch (low complexity) spans 580–593; it reads LSTPSTSTSNNSLP.

Homodimer. Heterodimer with ARID3B. Interacts with E2F1. Interacts with GTF2I and BTK. Widely expressed, with highest expression in skeletal muscle, thalamus, and colon.

The protein localises to the nucleus. It localises to the cytoplasm. Its function is as follows. Transcription factor which may be involved in the control of cell cycle progression by the RB1/E2F1 pathway and in B-cell differentiation. The sequence is that of AT-rich interactive domain-containing protein 3A (ARID3A) from Homo sapiens (Human).